We begin with the raw amino-acid sequence, 293 residues long: MNHLLSMEHLSTDQIYKLIQKASQFKSGERQLPNFEGKYVANLFFENSTRTKCSFEMAELKLGLKTISFETSTSSVSKGESLYDTCKTLESIGCDLLVIRHPFNNYYEKLANINIPIANAGDGSGQHPTQSLLDLMTIYEEYGYFEGLNVLICGDIKNSRVARSNYHSLKALGANVMFNSPNAWIDDSLEAPYVNIDDVIETVDIVMLLRIQHERHGLAEETRFAADDYHQKHGLNEVRYNKLQEHAIVMHPAPVNRGVEIQSDLVEASKSRIFKQMENGVYLRMAVIDELLK.

2 residues coordinate carbamoyl phosphate: Arg-50 and Thr-51. An L-aspartate-binding site is contributed by Lys-78. Carbamoyl phosphate-binding residues include Arg-100, His-127, and Gln-130. Residues Arg-160 and Arg-210 each coordinate L-aspartate. Positions 253 and 254 each coordinate carbamoyl phosphate.

Belongs to the aspartate/ornithine carbamoyltransferase superfamily. ATCase family. In terms of assembly, heterododecamer (2C3:3R2) of six catalytic PyrB chains organized as two trimers (C3), and six regulatory PyrI chains organized as three dimers (R2).

The catalysed reaction is carbamoyl phosphate + L-aspartate = N-carbamoyl-L-aspartate + phosphate + H(+). Its pathway is pyrimidine metabolism; UMP biosynthesis via de novo pathway; (S)-dihydroorotate from bicarbonate: step 2/3. In terms of biological role, catalyzes the condensation of carbamoyl phosphate and aspartate to form carbamoyl aspartate and inorganic phosphate, the committed step in the de novo pyrimidine nucleotide biosynthesis pathway. This is Aspartate carbamoyltransferase catalytic subunit from Staphylococcus aureus (strain USA300).